The primary structure comprises 139 residues: D-ribose pyranase (139 aa).

His-20 serves as the catalytic Proton donor. Residues Asp-28, His-106, and 128 to 130 each bind substrate; that span reads YAN.

It belongs to the RbsD / FucU family. RbsD subfamily. In terms of assembly, homodecamer.

The protein resides in the cytoplasm. The enzyme catalyses beta-D-ribopyranose = beta-D-ribofuranose. Its pathway is carbohydrate metabolism; D-ribose degradation; D-ribose 5-phosphate from beta-D-ribopyranose: step 1/2. Catalyzes the interconversion of beta-pyran and beta-furan forms of D-ribose. The chain is D-ribose pyranase from Photobacterium profundum (strain SS9).